A 216-amino-acid chain; its full sequence is uncharacterized protein (216 aa).

A helical transmembrane segment spans residues 39–59 (VLPLTFIGSLLILILTIVYYF). The stretch at 59–108 (FTLSGSVNELKNEISKEKSKKERLLSEIKRLEELKKTLETKKAIYEVVKI) forms a coiled coil.

It is found in the membrane. This is an uncharacterized protein from Aquifex aeolicus (strain VF5).